The following is a 1362-amino-acid chain: Bromodomain-containing protein 4B (1362 aa).

6 disordered regions span residues 22–57, 200–243, 274–367, 476–639, 699–941, and 953–1349; these read EGAQMSGQQQPAQPQPQTPMMQTPPPEIARPNQPKR, SLGD…HPPA, LANH…DSKT, DEPE…SYEE, CLRK…TQSP, and SQAP…MNFQ. The span at 34 to 49 shows a compositional bias: pro residues; it reads QPQPQTPMMQTPPPEI. The region spanning 57-163 is the Bromo 1 domain; it reads RQTNQLQYLL…KLFLQKISEM (107 aa). Pro residues predominate over residues 219–234; sequence TPTPPAVIRAPTPPQT. Residues 326 to 342 show a composition bias toward basic and acidic residues; that stretch reads PRKESGRQIRPIKKTEV. Residues 348–358 are compositionally biased toward pro residues; it reads PAPPDLHPQPA. One can recognise a Bromo 2 domain in the interval 365-474; it reads SKTSEQLRYC…DVFEMRFAKM (110 aa). A compositionally biased stretch (pro residues) spans 481-503; sequence APAPVPSPAPGPPAPSIKIPPPT. The interval 503–521 is NPS region; the sequence is TSSDTSSDSSSDSESSSDS. The span at 504-516 shows a compositional bias: low complexity; sequence SSDTSSDSSSDSE. The interval 542–597 is BID region; it reads QLAALSQPQPNKPKKKEREKRKEKHKRKEEVEETRKGRIREPPAKKPKKSVQVSGG. Over residues 553–568 the composition is skewed to basic residues; it reads KPKKKEREKRKEKHKR. Basic and acidic residues predominate over residues 569–585; it reads KEEVEETRKGRIREPPA. The span at 606-621 shows a compositional bias: pro residues; the sequence is PPPVTRPARPAPPPAP. An NET domain is found at 623-707; the sequence is ESSEEDTQRC…SCLRKKRKPQ (85 aa). The segment covering 628 to 639 has biased composition (basic and acidic residues); sequence DTQRCRPMSYEE. A compositionally biased stretch (low complexity) spans 722 to 737; the sequence is SYSSSESESSSESSTS. A compositionally biased stretch (basic residues) spans 750-766; it reads QKKKGHSGRESRKHHHP. Pro residues-rich tracts occupy residues 772–793 and 871–889; these read IAPPPVMKPPSPTLAPSYPPPS and PARPPSASPPLPPPQPHHQ. Residues 893–905 show a composition bias toward basic residues; it reads HVHHHHHHHHHAQ. Positions 926–941 are enriched in polar residues; it reads YLQQLHKSQQPPTQSP. Composition is skewed to low complexity over residues 953–963, 977–1006, 1014–1028, and 1041–1050; these read SQAPMAAPAQS, SSASPAPSPASSHIHQMQSPPVVPQQQPAG, QQQQQQQQQQHPALQ, and HQQAKQQQVI. A C-terminal (CTD) region region spans residues 1061 to 1361; the sequence is RQQKQETYPG…LMEIFEQNLF (301 aa). The segment covering 1086 to 1099 has biased composition (pro residues); sequence QVPPYPGLTHPPSP. The segment covering 1186-1207 has biased composition (basic and acidic residues); it reads PEKEKQKQEPKTPVAPKKDLKI. The span at 1224 to 1234 shows a compositional bias: polar residues; that stretch reads PTSAGKSTSDS. The span at 1236-1293 shows a compositional bias: basic and acidic residues; sequence ELFRRQAREKEERERALKHQAEQAERMRREQERMRTREDDDVQDQTRKAHEEARRRQE. The span at 1308-1319 shows a compositional bias: low complexity; that stretch reads PAAPSPAQSSQP. A compositionally biased stretch (basic and acidic residues) spans 1322 to 1334; sequence DQREMARKREQER.

This sequence belongs to the BET family.

The protein resides in the nucleus. Its subcellular location is the chromosome. In terms of biological role, chromatin reader protein that recognizes and binds acetylated histones and plays a key role in transmission of epigenetic memory across cell divisions and transcription regulation. Remains associated with acetylated chromatin throughout the entire cell cycle and provides epigenetic memory for postmitotic G1 gene transcription by preserving acetylated chromatin status and maintaining high-order chromatin structure. During interphase, plays a key role in regulating the transcription of signal-inducible genes by associating with the P-TEFb complex and recruiting it to promoters. This Xenopus laevis (African clawed frog) protein is Bromodomain-containing protein 4B (brd4-b).